A 194-amino-acid polypeptide reads, in one-letter code: Orotate phosphoribosyltransferase (194 aa).

117–125 (EDIVTTGLS) contributes to the 5-phospho-alpha-D-ribose 1-diphosphate binding site. The orotate site is built by Thr-121 and Arg-149.

The protein belongs to the purine/pyrimidine phosphoribosyltransferase family. PyrE subfamily. Homodimer. Requires Mg(2+) as cofactor.

It catalyses the reaction orotidine 5'-phosphate + diphosphate = orotate + 5-phospho-alpha-D-ribose 1-diphosphate. It functions in the pathway pyrimidine metabolism; UMP biosynthesis via de novo pathway; UMP from orotate: step 1/2. Its function is as follows. Catalyzes the transfer of a ribosyl phosphate group from 5-phosphoribose 1-diphosphate to orotate, leading to the formation of orotidine monophosphate (OMP). The chain is Orotate phosphoribosyltransferase from Parvibaculum lavamentivorans (strain DS-1 / DSM 13023 / NCIMB 13966).